The sequence spans 281 residues: 2-dehydro-3-deoxyphosphooctonate aldolase (281 aa).

The protein belongs to the KdsA family.

Its subcellular location is the cytoplasm. It catalyses the reaction D-arabinose 5-phosphate + phosphoenolpyruvate + H2O = 3-deoxy-alpha-D-manno-2-octulosonate-8-phosphate + phosphate. It participates in carbohydrate biosynthesis; 3-deoxy-D-manno-octulosonate biosynthesis; 3-deoxy-D-manno-octulosonate from D-ribulose 5-phosphate: step 2/3. Its pathway is bacterial outer membrane biogenesis; lipopolysaccharide biosynthesis. The polypeptide is 2-dehydro-3-deoxyphosphooctonate aldolase (Pseudomonas fluorescens (strain ATCC BAA-477 / NRRL B-23932 / Pf-5)).